The chain runs to 282 residues: 4-diphosphocytidyl-2-C-methyl-D-erythritol kinase (282 aa).

Lys9 is an active-site residue. 98-108 (PMGGGLGGGSS) serves as a coordination point for ATP. The active site involves Asp140.

Belongs to the GHMP kinase family. IspE subfamily. Homodimer.

It carries out the reaction 4-CDP-2-C-methyl-D-erythritol + ATP = 4-CDP-2-C-methyl-D-erythritol 2-phosphate + ADP + H(+). It participates in isoprenoid biosynthesis; isopentenyl diphosphate biosynthesis via DXP pathway; isopentenyl diphosphate from 1-deoxy-D-xylulose 5-phosphate: step 3/6. Catalyzes the phosphorylation of the position 2 hydroxy group of 4-diphosphocytidyl-2C-methyl-D-erythritol. This chain is 4-diphosphocytidyl-2-C-methyl-D-erythritol kinase, found in Salmonella agona (strain SL483).